A 152-amino-acid chain; its full sequence is Calcium-binding protein SPEC 1A (152 aa).

EF-hand domains are found at residues 10–45 (EEVT…TGKS), 46–81 (YTDK…QMVK), 84–119 (WKEE…SKPP), and 120–152 (MKRK…IKSC). 20 residues coordinate Ca(2+): D23, D25, S27, S29, E34, D59, D61, S63, T65, E70, D97, D99, N101, S103, E108, D133, N135, D137, K139, and E144. The segment at 95 to 121 (DMDKDGNGSLSPQELREALSASKPPMK) is disordered.

In terms of tissue distribution, found in cell lineages giving rise to the aboral ectoderm, a squamous epithelium covering the surface of the late stage embryo and larva.

Its function is as follows. Calcium-binding protein involved in larval development and metamorphosis. Likely to function as calcium buffers mediating the transport of calcium from the sea water to the blastocoel where calcium is required for skeleton formation. The sequence is that of Calcium-binding protein SPEC 1A (SPEC1) from Strongylocentrotus purpuratus (Purple sea urchin).